Consider the following 221-residue polypeptide: UPF0758 protein YicR (221 aa).

An MPN domain is found at 99-221; sequence ALLSPEMTRE…YVSFAERGWI (123 aa). Positions 170, 172, and 183 each coordinate Zn(2+). A JAMM motif motif is present at residues 170 to 183; that stretch reads HNHPSGCAEPSKAD.

Belongs to the UPF0758 family. YicR subfamily.

The sequence is that of UPF0758 protein YicR from Salmonella paratyphi A (strain ATCC 9150 / SARB42).